The following is a 77-amino-acid chain: Metallothionein-like protein 2B (77 aa).

Belongs to the metallothionein superfamily. Type 15 family. As to expression, expressed in vascular tissues of all organs. Expressed in root and leaf phloem, pollen and root hairs.

In terms of biological role, metallothioneins have a high content of cysteine residues that bind various heavy metals. Functions as a metal chelator of copper (Cu) and zinc (Zn). Functions cooperatively with the phytochelatin synthase PCS1 to protect plants from Cu and cadmium toxicity. Plays a role in Cu homeostasis, specifically in the remobilization of Cu from senescing leaves. The mobilization of Cu from internal sources is important for seed development. This Arabidopsis thaliana (Mouse-ear cress) protein is Metallothionein-like protein 2B (MT2B).